The sequence spans 361 residues: 3-dehydroquinate synthase (361 aa).

Residues 70–75 (DGEQHK), 104–108 (GVVGD), 128–129 (TT), Lys141, and Lys150 each bind NAD(+). Glu183, His246, and His263 together coordinate Zn(2+).

Belongs to the sugar phosphate cyclases superfamily. Dehydroquinate synthase family. It depends on Co(2+) as a cofactor. The cofactor is Zn(2+). NAD(+) is required as a cofactor.

The protein resides in the cytoplasm. It carries out the reaction 7-phospho-2-dehydro-3-deoxy-D-arabino-heptonate = 3-dehydroquinate + phosphate. It participates in metabolic intermediate biosynthesis; chorismate biosynthesis; chorismate from D-erythrose 4-phosphate and phosphoenolpyruvate: step 2/7. Catalyzes the conversion of 3-deoxy-D-arabino-heptulosonate 7-phosphate (DAHP) to dehydroquinate (DHQ). The chain is 3-dehydroquinate synthase from Teredinibacter turnerae (strain ATCC 39867 / T7901).